The following is a 304-amino-acid chain: Large ribosomal subunit protein uL18z (304 aa).

The interval 285–304 (LNALNSSAGADDDDEEEDDE) is disordered. The span at 294 to 304 (ADDDDEEEDDE) shows a compositional bias: acidic residues.

The protein belongs to the universal ribosomal protein uL18 family. Component of the large ribosomal subunit (LSU).

It localises to the cytoplasm. Its subcellular location is the nucleus. Its function is as follows. Component of the ribosome, a large ribonucleoprotein complex responsible for the synthesis of proteins in the cell. The small ribosomal subunit (SSU) binds messenger RNAs (mRNAs) and translates the encoded message by selecting cognate aminoacyl-transfer RNA (tRNA) molecules. The large subunit (LSU) contains the ribosomal catalytic site termed the peptidyl transferase center (PTC), which catalyzes the formation of peptide bonds, thereby polymerizing the amino acids delivered by tRNAs into a polypeptide chain. The nascent polypeptides leave the ribosome through a tunnel in the LSU and interact with protein factors that function in enzymatic processing, targeting, and the membrane insertion of nascent chains at the exit of the ribosomal tunnel. The chain is Large ribosomal subunit protein uL18z (RPL5A) from Oryza sativa subsp. japonica (Rice).